Reading from the N-terminus, the 359-residue chain is 4-hydroxy-2-oxovalerate aldolase 1 (359 aa).

Residues 23–275 (VRVTDTSLRD…KTGIDFFDIA (253 aa)) form the Pyruvate carboxyltransferase domain. 31–32 (RD) is a substrate binding site. Asp32 provides a ligand contact to Mn(2+). His35 functions as the Proton acceptor in the catalytic mechanism. The substrate site is built by Ser185 and His214. Residues His214 and His216 each coordinate Mn(2+). Tyr305 is a binding site for substrate.

Belongs to the 4-hydroxy-2-oxovalerate aldolase family.

The enzyme catalyses (S)-4-hydroxy-2-oxopentanoate = acetaldehyde + pyruvate. The chain is 4-hydroxy-2-oxovalerate aldolase 1 from Mycobacteroides abscessus (strain ATCC 19977 / DSM 44196 / CCUG 20993 / CIP 104536 / JCM 13569 / NCTC 13031 / TMC 1543 / L948) (Mycobacterium abscessus).